Consider the following 333-residue polypeptide: Syntaxin-4 (333 aa).

Topologically, residues 1 to 312 (MGKDRLPELL…QHQKKARKKK (312 aa)) are cytoplasmic. Low complexity predominate over residues 50 to 66 (YSVVSQNSHSCSNNNSS). The interval 50–81 (YSVVSQNSHSCSNNNSSTEPKDRSSSKMTQYG) is disordered. Residues 91–116 (YTEIRQQLAQIAANLETMNRMAQTVN) are a coiled coil. A t-SNARE coiled-coil homology domain is found at 239 to 301 (LREMMDRFNE…DKGADELDQA (63 aa)). The chain crosses the membrane as a helical; Anchor for type IV membrane protein span at residues 313-333 (IMLIVILAAVLLVLLLVGIYL).

It belongs to the syntaxin family.

Its subcellular location is the membrane. Its function is as follows. Potentially involved in docking of synaptic vesicles at presynaptic active zones. The protein is Syntaxin-4 of Drosophila melanogaster (Fruit fly).